We begin with the raw amino-acid sequence, 526 residues long: Variant surface glycoprotein MITAT 1.4A (526 aa).

The first 33 residues, Met-1–Gly-33, serve as a signal peptide directing secretion. 2 cysteine pairs are disulfide-bonded: Cys-47-Cys-173 and Cys-154-Cys-215. A disordered region spans residues Asn-157–Ala-193. The N-linked (GlcNAc...) asparagine glycan is linked to Asn-453. Asp-503 carries GPI-anchor amidated aspartate lipidation. The propeptide at Ser-504 to Phe-526 is removed in mature form.

It is found in the cell membrane. In terms of biological role, VSG forms a coat on the surface of the parasite. The trypanosome evades the immune response of the host by expressing a series of antigenically distinct VSGs from an estimated 1000 VSG genes. The chain is Variant surface glycoprotein MITAT 1.4A from Trypanosoma brucei brucei.